A 338-amino-acid polypeptide reads, in one-letter code: Cytochrome c biogenesis protein CcsA (338 aa).

8 helical membrane passes run 11–31 (VLLDNAAFAALMVATALYWLA), 39–59 (LLHELGTGASAVALLSVTGLL), 76–96 (ESLFFLCWCVLAVHIAAEAFA), 100–120 (LVGVFTLPVALGMVAFSSLTL), 145–165 (VMILSYGALMVGSLVSIAFLI), 244–264 (LIGLGFPLITVGIIAGAVWAN), 278–295 (TWSLITWFIFAAYLHARI), and 305–325 (ATLAAVGFVSVWITYLGVNFL).

It belongs to the CcmF/CycK/Ccl1/NrfE/CcsA family. As to quaternary structure, may interact with ccs1.

The protein resides in the cell inner membrane. Its function is as follows. Required during biogenesis of c-type cytochromes (cytochrome c6 and cytochrome f) at the step of heme attachment. In Gloeobacter violaceus (strain ATCC 29082 / PCC 7421), this protein is Cytochrome c biogenesis protein CcsA.